A 356-amino-acid polypeptide reads, in one-letter code: Histidinol-phosphate aminotransferase (356 aa).

An N6-(pyridoxal phosphate)lysine modification is found at K214.

The protein belongs to the class-II pyridoxal-phosphate-dependent aminotransferase family. Histidinol-phosphate aminotransferase subfamily. In terms of assembly, homodimer. Pyridoxal 5'-phosphate is required as a cofactor.

The enzyme catalyses L-histidinol phosphate + 2-oxoglutarate = 3-(imidazol-4-yl)-2-oxopropyl phosphate + L-glutamate. Its pathway is amino-acid biosynthesis; L-histidine biosynthesis; L-histidine from 5-phospho-alpha-D-ribose 1-diphosphate: step 7/9. In Escherichia coli O81 (strain ED1a), this protein is Histidinol-phosphate aminotransferase.